A 463-amino-acid chain; its full sequence is Putative WAS protein family homolog 3 (463 aa).

Residues 1-54 are required for WASH complex assembly; sequence MTPVRMQHSLAGQTYAVPLIQPDLRREEAVQQMADALQYLQKVSGDIFSRISQQ. Positions 1 to 165 are WHD1; that stretch reads MTPVRMQHSL…EGLGGLPSNI (165 aa). Lys218 is covalently cross-linked (Glycyl lysine isopeptide (Lys-Gly) (interchain with G-Cter in ubiquitin)). Residues 295–463 are disordered; sequence QDGVLTPPPP…AEEDEDDWES (169 aa). Positions 300 to 312 are enriched in pro residues; that stretch reads TPPPPPPPPPPAP. The tract at residues 347–463 is VCA; that stretch reads QGAPREVVDP…AEEDEDDWES (117 aa). Residues 359–381 form the WH2 domain; that stretch reads GRATLLESIRQAGGIGKAKLRSM. Over residues 380–396 the composition is skewed to basic and acidic residues; the sequence is SMKERKLEKKQQKEQEQ. A compositionally biased stretch (gly residues) spans 422-434; the sequence is SGKGPGAGEGPGG. Acidic residues predominate over residues 454-463; sequence AEEDEDDWES.

Belongs to the WASH1 family. As to quaternary structure, component of the WASH core complex also described as WASH regulatory complex (SHRC) composed of WASH (WASHC1, WASH2P or WASH3P), WASHC2 (WASHC2A or WASHC2C), WASHC3, WASHC4 and WASHC5. The WASH core complex associates with the F-actin-capping protein dimer (formed by CAPZA1, CAPZA2 or CAPZA3 and CAPZB) in a transient or substoichiometric manner which was initially described as WASH complex. Interacts (via WHD1 region) with WASHC2C; the interaction is direct. Interacts with alpha-tubulin. Interacts with BECN1; WASHC1 and AMBRA1 can competitively interact with BECN1. Interacts with BLOC1S2; may associate with the BLOC-1 complex. Interacts with tubulin gamma chain (TUBG1 or TUBG2). Interacts with EXOC1, EXOC4, EXOC8; in MMP14-positive endosomes in breast tumor cells; indicative for an association with the exocyst complex.

The protein resides in the early endosome. Its subcellular location is the early endosome membrane. It is found in the recycling endosome membrane. The protein localises to the cell projection. It localises to the lamellipodium. The protein resides in the filopodium. Its subcellular location is the cytoplasmic vesicle. It is found in the autophagosome. The protein localises to the cytoplasm. It localises to the cytoskeleton. The protein resides in the microtubule organizing center. Its subcellular location is the centrosome. It is found in the centriole. Its function is as follows. Acts as a nucleation-promoting factor at the surface of endosomes, where it recruits and activates the Arp2/3 complex to induce actin polymerization, playing a key role in the fission of tubules that serve as transport intermediates during endosome sorting. Involved in endocytic trafficking of EGF. Involved in transferrin receptor recycling. Regulates the trafficking of endosomal alpha5beta1 integrin to the plasma membrane and involved in invasive cell migration. In T-cells involved in endosome-to-membrane recycling of receptors including T-cell receptor (TCR), CD28 and ITGAL; proposed to be implicated in T cell proliferation and effector function. In dendritic cells involved in endosome-to-membrane recycling of major histocompatibility complex (MHC) class II probably involving retromer and subsequently allowing antigen sampling, loading and presentation during T-cell activation. Involved in Arp2/3 complex-dependent actin assembly driving Salmonella typhimurium invasion independent of ruffling. Involved in the exocytosis of MMP14 leading to matrix remodeling during invasive migration and implicating late endosome-to-plasma membrane tubular connections and cooperation with the exocyst complex. Involved in negative regulation of autophagy independently from its role in endosomal sorting by inhibiting BECN1 ubiquitination to inactivate PIK3C3/Vps34 activity. This chain is Putative WAS protein family homolog 3 (WASH3P), found in Homo sapiens (Human).